A 466-amino-acid polypeptide reads, in one-letter code: Glutamate decarboxylase (466 aa).

Residue K277 is modified to N6-(pyridoxal phosphate)lysine.

The protein belongs to the group II decarboxylase family. The cofactor is pyridoxal 5'-phosphate.

The enzyme catalyses L-glutamate + H(+) = 4-aminobutanoate + CO2. Functionally, converts internalized glutamate to GABA and increases the internal pH. Involved in glutamate-dependent acid resistance. The chain is Glutamate decarboxylase (gadB) from Lactococcus lactis subsp. lactis (strain IL1403) (Streptococcus lactis).